The primary structure comprises 625 residues: Probable potassium transport system protein Kup 2 (625 aa).

12 helical membrane-spanning segments follow: residues 15–35 (LSFA…LYAF), 52–72 (ILSL…LVIV), 98–118 (GGWL…DGML), 134–154 (LSPN…FFLF), 164–184 (IGVY…ILGF), 212–232 (FALF…ALFA), 246–266 (WFAV…AFVL), 284–304 (FLPV…QAII), 336–356 (VYLP…VVIF), 365–385 (AYGI…GIIA), 394–414 (FKIL…AGNI), and 417–437 (LLTG…VMYT).

Belongs to the HAK/KUP transporter (TC 2.A.72) family.

The protein localises to the cell inner membrane. The catalysed reaction is K(+)(in) + H(+)(in) = K(+)(out) + H(+)(out). Transport of potassium into the cell. Likely operates as a K(+):H(+) symporter. In Legionella pneumophila (strain Paris), this protein is Probable potassium transport system protein Kup 2.